Here is a 98-residue protein sequence, read N- to C-terminus: MANTKFRPLHDRVVVRRVESENKTAGGIIIPDTAQEKPQEGEVIAVGNGVLNDNGQRVSLEVKEGDRILFGKWSGTEVKINGEELLIMKESDIMGILA.

The protein belongs to the GroES chaperonin family. In terms of assembly, heptamer of 7 subunits arranged in a ring. Interacts with the chaperonin GroEL.

The protein resides in the cytoplasm. Its function is as follows. Together with the chaperonin GroEL, plays an essential role in assisting protein folding. The GroEL-GroES system forms a nano-cage that allows encapsulation of the non-native substrate proteins and provides a physical environment optimized to promote and accelerate protein folding. GroES binds to the apical surface of the GroEL ring, thereby capping the opening of the GroEL channel. In Bartonella bacilliformis (strain ATCC 35685 / KC583 / Herrer 020/F12,63), this protein is Co-chaperonin GroES.